A 420-amino-acid polypeptide reads, in one-letter code: L-glutamine:2-deoxy-scyllo-inosose aminotransferase (420 aa).

N6-(pyridoxal phosphate)lysine is present on Lys201.

This sequence belongs to the DegT/DnrJ/EryC1 family. L-glutamine:2-deoxy-scyllo-inosose/scyllo-inosose aminotransferase subfamily. Requires pyridoxal 5'-phosphate as cofactor.

The enzyme catalyses 2-deoxy-L-scyllo-inosose + L-glutamine = 2-deoxy-scyllo-inosamine + 2-oxoglutaramate. It catalyses the reaction 3-amino-2,3-dideoxy-scyllo-inosose + L-glutamine = 2-deoxystreptamine + 2-oxoglutaramate. Its pathway is metabolic intermediate biosynthesis; 2-deoxystreptamine biosynthesis; 2-deoxystreptamine from D-glucose 6-phosphate: step 2/4. It participates in antibiotic biosynthesis; gentamicin biosynthesis. Catalyzes the PLP-dependent transamination of 2-deoxy-scyllo-inosose (2-DOI) to form 2-deoxy-scyllo-inosamine (2-DOIA) using L-glutamine as the amino donor. Also catalyzes the transamination of 3-amino-2,3-dideoxy-scyllo-inosose (keto-2-DOIA) into 2-deoxystreptamine (2-DOS). The polypeptide is L-glutamine:2-deoxy-scyllo-inosose aminotransferase (gntA) (Micromonospora echinospora (Micromonospora purpurea)).